Here is an 843-residue protein sequence, read N- to C-terminus: INO80 complex subunit D-B (843 aa).

Residues 159–175 (TLNHKQKQQDHSVDTNH) are compositionally biased toward basic and acidic residues. Disordered stretches follow at residues 159 to 216 (TLNH…PTVR), 221 to 240 (FKTSSSLQDTHQGSKDSTDN), 503 to 550 (YHHH…LPQG), 695 to 726 (SLLHPSEDAFPPSPPSPQPPLTPPSSVGHLTD), and 791 to 843 (LSTP…TAAP). Composition is skewed to polar residues over residues 176–187 (LRTSSLPSTLSH), 197–216 (RATQTPINPSSPRAATPTVR), and 221–231 (FKTSSSLQDTH). Residues 503–540 (YHHHQQIQRHRPLKKAKPPALSKKHKKKGKRGTQRRPQ) show a composition bias toward basic residues. Residues 705 to 717 (PPSPPSPQPPLTP) are compositionally biased toward pro residues. Residues 796-821 (QPSSALSALPQSSQTRSTTTSPTSQT) show a composition bias toward low complexity.

Belongs to the INO80D family. As to quaternary structure, component of the chromatin-remodeling INO80 complex.

The protein resides in the nucleus. Functionally, putative regulatory component of the chromatin remodeling INO80 complex which is involved in transcriptional regulation, DNA replication and probably DNA repair. The protein is INO80 complex subunit D-B (ino80db) of Danio rerio (Zebrafish).